The sequence spans 1095 residues: Solute carrier family 12 member 1 (1095 aa).

Topologically, residues Met1–Phe173 are cytoplasmic. The RFXV motif signature appears at Arg16–Val19. Positions Ala29 to Glu49 are disordered. Ser57 and Ser87 each carry phosphoserine. 4 positions are modified to phosphothreonine: Thr91, Thr96, Thr101, and Thr114. The residue at position 116 (Ser116) is a Phosphoserine. Ser126 is modified (phosphoserine; by AMPK). Phosphoserine is present on Ser144. A helical membrane pass occupies residues Gly174–Ile194. Topologically, residues Arg195–Ser197 are extracellular. The chain crosses the membrane as a helical span at residues Trp198–Val218. Over Thr219–Ser255 the chain is Cytoplasmic. A helical membrane pass occupies residues Ile256–Ala276. Residues Glu277–Arg298 are Extracellular-facing. A helical membrane pass occupies residues Ile299–Glu319. Topologically, residues Ala320–Gln323 are cytoplasmic. A helical transmembrane segment spans residues Val324–Pro344. Over Ser345 to Gly375 the chain is Extracellular. A helical membrane pass occupies residues Phe376 to Ile396. The Cytoplasmic portion of the chain corresponds to Ser397–Leu413. A helical membrane pass occupies residues Ala414–Val434. At Arg435–Leu546 the chain is on the extracellular side. Asn442 and Asn452 each carry an N-linked (GlcNAc...) asparagine glycan. The next 2 membrane-spanning stretches (helical) occupy residues Thr547 to Ile567 and Ser568 to Ala588. The Extracellular portion of the chain corresponds to Lys589–Ser605. Residues Leu606–Ile626 form a helical membrane-spanning segment. The Cytoplasmic segment spans residues Thr627–Ser1095.

Belongs to the SLC12A transporter family. In terms of assembly, when phosphorylated, interacts with PPP3CB. In terms of processing, phosphorylated at Ser-87, Thr-96 and Thr-101 by OXSR1/OSR1 and STK39/SPAK downstream of WNK kinases (WNK1, WNK2, WNK3 or WNK4), promoting its activity. Short-term cyclosporine administration increases SLC12A1 phosphorylation in kidney thick ascending limb, possibly through the inhibition of PPP3CB/calcineurin A beta phosphatase. Predominantly expressed in kidney (at protein level). In terms of tissue distribution, kidney-specific; most highly expressed in the outer stripe of outer medulla (at protein level). As to expression, kidney-specific; most highly expressed in the cortical thick ascending limb (at protein level). Kidney-specific; most highly expressed in the inner stripe of outer medulla (at protein level).

Its subcellular location is the apical cell membrane. The enzyme catalyses K(+)(out) + 2 chloride(out) + Na(+)(out) = K(+)(in) + 2 chloride(in) + Na(+)(in). Activated following phosphorylation by OXSR1/OSR1 and STK39/SPAK downstream of WNK kinases (WNK1, WNK2, WNK3 or WNK4). With respect to regulation, inhibited by mercury dichloride and diuretic drug bumetaide. Inactive in isotonic conditions. In terms of biological role, renal sodium, potassium and chloride ion cotransporter that mediates the transepithelial NaCl reabsorption in the thick ascending limb and plays an essential role in the urinary concentration and volume regulation. Electrically silent transporter system. High affinity, high capacity cotransporter for sodium, potassium and chloride ions, with a coupling ratio 1Na(+):1K(+):2Cl(-). Functionally, high affinity, low capacity cotransporter for sodium, potassium and chloride ions, with a coupling ratio 1Na(+):1K(+):2Cl(-). Its function is as follows. Low affinity, low capacity cotransporter for sodium, potassium and chloride ions, with a coupling ratio 1Na(+):1K(+):2Cl(-). This Mus musculus (Mouse) protein is Solute carrier family 12 member 1 (Slc12a1).